Reading from the N-terminus, the 582-residue chain is MQSDIEICRNTPLSSIDVIAEKAGLLPEEFDTHGKYKAKVHPKCLARLNDNQNGKLVLVTAITPTPLGEGKTVTTIGLAQGLAKLKQSVMACIRQPSMGPVFGIKGGAAGGGYSQVAPMEELNLHLTGDIHAVTAAHNLASAALDARLFHEQREGYDAFEARTGLKALKIDVESITWKRVMDHNDRALRMVKIGLNEHGKTINGFERNEGFDISAASELMAIIALAKNLKDLRQRIGKIVVAYDLDGQPITTEDLQVAGAMAVTLKEAIAPTLMQTLEGVPTLIHAGPFANIAHGNSSIIADEIALKLSRYTVTEAGFGSDMGFEKACNIKAAAANKAPDCVVIVATLRGLKANSGHYDLRPGMAIPDSIFSPDQAALVAGFENLKWHIKNVHKYGIPAVVAINQFPQDCEQELTALQDLIHAFDPNVKVAISTAFAQGGEGTRDLAQYVVDACEKTTNFRPLYQKHQSLQEKLMSVCEAGYGATNVEMSELATKQLAHFEKLGFNELAVCIAKTPLSVTTDSSVKGAPVGFTVPIRELRLCAGAGFVYALSGSVMTMPGLPDKPAFMNLDLDEDGNIIGLS.

65–72 (TPLGEGKT) provides a ligand contact to ATP.

The protein belongs to the formate--tetrahydrofolate ligase family.

The catalysed reaction is (6S)-5,6,7,8-tetrahydrofolate + formate + ATP = (6R)-10-formyltetrahydrofolate + ADP + phosphate. It functions in the pathway one-carbon metabolism; tetrahydrofolate interconversion. The sequence is that of Formate--tetrahydrofolate ligase from Vibrio parahaemolyticus serotype O3:K6 (strain RIMD 2210633).